A 98-amino-acid chain; its full sequence is Small ribosomal subunit protein bS6 (98 aa).

It belongs to the bacterial ribosomal protein bS6 family.

In terms of biological role, binds together with bS18 to 16S ribosomal RNA. The sequence is that of Small ribosomal subunit protein bS6 from Staphylococcus aureus (strain NCTC 8325 / PS 47).